A 635-amino-acid polypeptide reads, in one-letter code: Allantoin permease (635 aa).

Residues 1 to 144 lie on the Cytoplasmic side of the membrane; it reads MANDALSAIF…AGTGLQLGLN (144 aa). The helical transmembrane segment at 145–165 threads the bilayer; sequence WWQCWLTVWIGYTFAGIFVVL. The Extracellular portion of the chain corresponds to 166–174; it reads NSRFGSAYH. Residues 175-195 traverse the membrane as a helical segment; the sequence is LSFPITVRASFGIFFSMWPII. Residues 196 to 198 are Cytoplasmic-facing; it reads NRV. A helical membrane pass occupies residues 199-219; it reads VMAIVWYAVQAWLGATPVALM. The Extracellular segment spans residues 220-243; it reads LKSIFGKNLEDRIPNHFGSPNSTT. Residues 244–264 form a helical membrane-spanning segment; the sequence is FEFMCFFIFWVVSIPFVLVAP. The Cytoplasmic segment spans residues 265–269; that stretch reads HKIRH. Residues 270 to 290 traverse the membrane as a helical segment; sequence LFTVKAALIPFAAFGFLIWAL. The Extracellular portion of the chain corresponds to 291–311; it reads KKSHGKIELGTLNDYSPHGSE. A helical membrane pass occupies residues 312–332; sequence FSWIFVRSLMACVANFAALII. The Cytoplasmic portion of the chain corresponds to 333–351; the sequence is NAPDFGRFAKNPQASLWPQ. Residues 352–372 form a helical membrane-spanning segment; sequence LVAIPLFFAITCLIGIIVTAA. Over 373–401 the chain is Extracellular; sequence GYHLYGVNYWSPLDVLGQFLETTYTRGTR. The helical transmembrane segment at 402 to 422 threads the bilayer; that stretch reads AGVFLISFVFALAQLGTNISA. Topologically, residues 423-443 are cytoplasmic; it reads NSLACGADMTALFPRYINIRR. Residues 444 to 464 form a helical membrane-spanning segment; the sequence is GSLFCVAMALCICPWNLMASS. The Extracellular portion of the chain corresponds to 465–466; it reads SK. Residues 467 to 487 traverse the membrane as a helical segment; it reads FTSALGAYAIFLSSIAGVICA. The Cytoplasmic segment spans residues 488 to 522; the sequence is DYFVVRRGYVKLTHLFLAQKGSFYMFGNKFGANWR. The chain crosses the membrane as a helical span at residues 523-543; the sequence is AFVAYICGIAPNLPGFIGDVG. Residues 544-560 lie on the Extracellular side of the membrane; it reads APKITVSEGAMRLYYLG. The chain crosses the membrane as a helical span at residues 561–581; it reads YPVGFFISAVIYLILCYFFPV. Topologically, residues 582 to 635 are cytoplasmic; the sequence is PGTPVTNFLTEKGWFQRWAYVEDFEQDWKNELRRDDLCDDTVSIYDGTEEKIVY.

This sequence belongs to the purine-cytosine permease (2.A.39) family.

It is found in the membrane. In terms of biological role, transport of allantoin. The protein is Allantoin permease (DAL4) of Saccharomyces cerevisiae (strain ATCC 204508 / S288c) (Baker's yeast).